Consider the following 364-residue polypeptide: Spermidine/putrescine import ATP-binding protein PotA (364 aa).

One can recognise an ABC transporter domain in the interval 5–235 (LSFKSVSKQY…PVNRFVADFI (231 aa)). 37-44 (GPSGCGKT) lines the ATP pocket.

This sequence belongs to the ABC transporter superfamily. Spermidine/putrescine importer (TC 3.A.1.11.1) family. In terms of assembly, the complex is composed of two ATP-binding proteins (PotA), two transmembrane proteins (PotB and PotC) and a solute-binding protein (PotD).

It localises to the cell membrane. The enzyme catalyses ATP + H2O + polyamine-[polyamine-binding protein]Side 1 = ADP + phosphate + polyamineSide 2 + [polyamine-binding protein]Side 1.. Part of the ABC transporter complex PotABCD involved in spermidine/putrescine import. Responsible for energy coupling to the transport system. The protein is Spermidine/putrescine import ATP-binding protein PotA of Staphylococcus saprophyticus subsp. saprophyticus (strain ATCC 15305 / DSM 20229 / NCIMB 8711 / NCTC 7292 / S-41).